Here is a 189-residue protein sequence, read N- to C-terminus: Ras-like protein 1 (189 aa).

10–17 (GAGGVGKS) provides a ligand contact to GTP. Residues 32 to 40 (YDPTIEDSY) carry the Effector region motif. GTP contacts are provided by residues 57–61 (DTAGQ) and 116–119 (NKCD). Residue Cys186 is modified to Cysteine methyl ester. Cys186 carries the S-geranylgeranyl cysteine lipid modification. The propeptide at 187–189 (KML) is removed in mature form.

This sequence belongs to the small GTPase superfamily. Ras family.

Its subcellular location is the cell membrane. The enzyme catalyses GTP + H2O = GDP + phosphate + H(+). With respect to regulation, alternates between an inactive form bound to GDP and an active form bound to GTP. Activated by a guanine nucleotide-exchange factor (GEF) and inactivated by a GTPase-activating protein (GAP). Functionally, ras proteins bind GDP/GTP and possess intrinsic GTPase activity. Plays a role in eye development by regulating cell growth, survival of postmitotic ommatidial cells and differentiation of photoreceptor cells. During larval development, mediates Ptth/tor signaling leading to the production of ecdysone, a hormone required for the initiation of metamorphosis. In Drosophila grimshawi (Hawaiian fruit fly), this protein is Ras-like protein 1.